An 803-amino-acid polypeptide reads, in one-letter code: Leucine--tRNA ligase (803 aa).

A 'HIGH' region motif is present at residues 40–51 (PYPSGAGLHVGH). The 'KMSKS' region motif lies at 575-579 (KMSKS). Lysine 578 is an ATP binding site.

This sequence belongs to the class-I aminoacyl-tRNA synthetase family.

Its subcellular location is the cytoplasm. The enzyme catalyses tRNA(Leu) + L-leucine + ATP = L-leucyl-tRNA(Leu) + AMP + diphosphate. The chain is Leucine--tRNA ligase from Listeria innocua serovar 6a (strain ATCC BAA-680 / CLIP 11262).